A 419-amino-acid chain; its full sequence is Gamma-glutamyl phosphate reductase (419 aa).

It belongs to the gamma-glutamyl phosphate reductase family.

Its subcellular location is the cytoplasm. It catalyses the reaction L-glutamate 5-semialdehyde + phosphate + NADP(+) = L-glutamyl 5-phosphate + NADPH + H(+). Its pathway is amino-acid biosynthesis; L-proline biosynthesis; L-glutamate 5-semialdehyde from L-glutamate: step 2/2. Catalyzes the NADPH-dependent reduction of L-glutamate 5-phosphate into L-glutamate 5-semialdehyde and phosphate. The product spontaneously undergoes cyclization to form 1-pyrroline-5-carboxylate. This Caulobacter sp. (strain K31) protein is Gamma-glutamyl phosphate reductase.